A 132-amino-acid chain; its full sequence is Ribosome-binding factor A (132 aa).

This sequence belongs to the RbfA family. As to quaternary structure, monomer. Binds 30S ribosomal subunits, but not 50S ribosomal subunits or 70S ribosomes.

The protein resides in the cytoplasm. One of several proteins that assist in the late maturation steps of the functional core of the 30S ribosomal subunit. Associates with free 30S ribosomal subunits (but not with 30S subunits that are part of 70S ribosomes or polysomes). Required for efficient processing of 16S rRNA. May interact with the 5'-terminal helix region of 16S rRNA. The protein is Ribosome-binding factor A of Prochlorococcus marinus subsp. pastoris (strain CCMP1986 / NIES-2087 / MED4).